A 243-amino-acid polypeptide reads, in one-letter code: 1-(5-phosphoribosyl)-5-[(5-phosphoribosylamino)methylideneamino] imidazole-4-carboxamide isomerase (243 aa).

Catalysis depends on Asp-8, which acts as the Proton acceptor. Residue Asp-129 is the Proton donor of the active site.

It belongs to the HisA/HisF family.

The protein resides in the cytoplasm. The enzyme catalyses 1-(5-phospho-beta-D-ribosyl)-5-[(5-phospho-beta-D-ribosylamino)methylideneamino]imidazole-4-carboxamide = 5-[(5-phospho-1-deoxy-D-ribulos-1-ylimino)methylamino]-1-(5-phospho-beta-D-ribosyl)imidazole-4-carboxamide. It functions in the pathway amino-acid biosynthesis; L-histidine biosynthesis; L-histidine from 5-phospho-alpha-D-ribose 1-diphosphate: step 4/9. The chain is 1-(5-phosphoribosyl)-5-[(5-phosphoribosylamino)methylideneamino] imidazole-4-carboxamide isomerase from Moorella thermoacetica (strain ATCC 39073 / JCM 9320).